Reading from the N-terminus, the 240-residue chain is MADS-box transcription factor 27 (240 aa).

In terms of domain architecture, MADS-box spans 1–61 (MGRGKIVIRR…GRLYEYSSTS (61 aa)). In terms of domain architecture, K-box spans 86–176 (LKFWQREAAS…YKKISLIRQE (91 aa)). A compositionally biased stretch (polar residues) spans 220–231 (LPQHSDAEQSTA). A disordered region spans residues 220–240 (LPQHSDAEQSTAPKLGLQLNP).

As to expression, ubiquitous.

It is found in the nucleus. Its function is as follows. Probable transcription factor. The sequence is that of MADS-box transcription factor 27 (MADS27) from Oryza sativa subsp. japonica (Rice).